Consider the following 716-residue polypeptide: MAKMRVYEYAKAINVSSKDIIAALKDMNIEVNNHMAMIEENAIKQLDQKFKKSAKPAGNKKDAGTGGQKPQQEAAKLNAGSKPNKNRDGKKNNVQNTQFNNKNKKKNNNNKKNKRGKNHQSPQEKQFKPKKELPEKIEFTNSMSVGALAEELGKEPSEIIKKLMLLGIMATINQDLDKDTVELIASEYGVEVEEVIVHEETEFEKYEEPDNEEDLEIRPPVVTIMGHVDHGKTTLLDSIRKTKVVEGEAGGITQHIGAYQIEENGKKITFLDTPGHAAFTTMRARGAEVTDITILVVAADDGVMPQTVEAINHAKAAEVPIIVAVNKIDKPTANPDRVMQELTEHGLVPEAWGGETIFVPLSALSGEGIDELIEMILLVSEVEELKANPNRRAKGTVIEAELDKGKGSVATLLVQNGTLHVGDPIVVGNTFGRVRAMVNDVGRRVKSAGPSTPVEITGLNEVPNAGDQFLVFKDEKTARSVGEARATKQLEEQRSDKAKLSLDDLFEQIKQGDVKEINLVVKADVQGSVEALAAALQKIEVEGVRVKIIHTGVGAITESDIILASASNAIVIGFNVRPDGNAKSTAEAENVDIRLHRIIYKVIDEIEAAMKGMLDPEYEEKVIGMVEVRQTFKVSKIGTIAGGYVTEGTITRDSGIRLIRDGVVIFEGEVDVLKRFKDDVKEVSQGYECGITIKKYNDIREGDMIEAYVMQEIERK.

The tract at residues 50–137 (FKKSAKPAGN…KPKKELPEKI (88 aa)) is disordered. A compositionally biased stretch (low complexity) spans 92–101 (NNVQNTQFNN). The segment covering 102–118 (KNKKKNNNNKKNKRGKN) has biased composition (basic residues). Over residues 125–137 (KQFKPKKELPEKI) the composition is skewed to basic and acidic residues. One can recognise a tr-type G domain in the interval 217–386 (IRPPVVTIMG…LLVSEVEELK (170 aa)). Residues 226–233 (GHVDHGKT) form a G1 region. 226 to 233 (GHVDHGKT) is a GTP binding site. The G2 stretch occupies residues 251 to 255 (GITQH). The segment at 272–275 (DTPG) is G3. GTP-binding positions include 272–276 (DTPGH) and 326–329 (NKID). The segment at 326–329 (NKID) is G4. Positions 362–364 (SAL) are G5.

The protein belongs to the TRAFAC class translation factor GTPase superfamily. Classic translation factor GTPase family. IF-2 subfamily.

It localises to the cytoplasm. One of the essential components for the initiation of protein synthesis. Protects formylmethionyl-tRNA from spontaneous hydrolysis and promotes its binding to the 30S ribosomal subunits. Also involved in the hydrolysis of GTP during the formation of the 70S ribosomal complex. The sequence is that of Translation initiation factor IF-2 from Bacillus licheniformis (strain ATCC 14580 / DSM 13 / JCM 2505 / CCUG 7422 / NBRC 12200 / NCIMB 9375 / NCTC 10341 / NRRL NRS-1264 / Gibson 46).